We begin with the raw amino-acid sequence, 306 residues long: UDP-3-O-acyl-N-acetylglucosamine deacetylase (306 aa).

The Zn(2+) site is built by His79, His238, and Asp242. Residue His265 is the Proton donor of the active site.

Belongs to the LpxC family. Zn(2+) serves as cofactor.

The catalysed reaction is a UDP-3-O-[(3R)-3-hydroxyacyl]-N-acetyl-alpha-D-glucosamine + H2O = a UDP-3-O-[(3R)-3-hydroxyacyl]-alpha-D-glucosamine + acetate. The protein operates within glycolipid biosynthesis; lipid IV(A) biosynthesis; lipid IV(A) from (3R)-3-hydroxytetradecanoyl-[acyl-carrier-protein] and UDP-N-acetyl-alpha-D-glucosamine: step 2/6. Its function is as follows. Catalyzes the hydrolysis of UDP-3-O-myristoyl-N-acetylglucosamine to form UDP-3-O-myristoylglucosamine and acetate, the committed step in lipid A biosynthesis. This Shewanella piezotolerans (strain WP3 / JCM 13877) protein is UDP-3-O-acyl-N-acetylglucosamine deacetylase.